The following is a 413-amino-acid chain: Acetate kinase (413 aa).

Asparagine 7 contributes to the Mg(2+) binding site. ATP is bound at residue lysine 14. Arginine 98 is a binding site for substrate. Aspartate 157 acts as the Proton donor/acceptor in catalysis. ATP contacts are provided by residues histidine 216–glycine 220, aspartate 291–arginine 293, and glycine 339–asparagine 343. Glutamate 392 contacts Mg(2+).

The protein belongs to the acetokinase family. As to quaternary structure, homodimer. Requires Mg(2+) as cofactor. Mn(2+) serves as cofactor.

Its subcellular location is the cytoplasm. It catalyses the reaction acetate + ATP = acetyl phosphate + ADP. The protein operates within metabolic intermediate biosynthesis; acetyl-CoA biosynthesis; acetyl-CoA from acetate: step 1/2. Its function is as follows. Catalyzes the formation of acetyl phosphate from acetate and ATP. Can also catalyze the reverse reaction. The protein is Acetate kinase of Synechocystis sp. (strain ATCC 27184 / PCC 6803 / Kazusa).